The following is a 213-amino-acid chain: Redox-sensing transcriptional repressor Rex (213 aa).

The segment at residues 16–55 (IYYRYLRLLSNSGKNRVSSTELAEAVKVDSATIRRDFSYF) is a DNA-binding region (H-T-H motif). 90–95 (GVGNLG) is a binding site for NAD(+).

Belongs to the transcriptional regulatory Rex family. As to quaternary structure, homodimer.

The protein resides in the cytoplasm. Modulates transcription in response to changes in cellular NADH/NAD(+) redox state. The protein is Redox-sensing transcriptional repressor Rex of Ligilactobacillus salivarius (strain UCC118) (Lactobacillus salivarius).